The primary structure comprises 213 residues: Orotate phosphoribosyltransferase (213 aa).

Position 26 (K26) interacts with 5-phospho-alpha-D-ribose 1-diphosphate. 34–35 (FF) lines the orotate pocket. 5-phospho-alpha-D-ribose 1-diphosphate contacts are provided by residues 72–73 (YK), R99, K100, K103, H105, and 124–132 (DDVITAGTA). Positions 128 and 156 each coordinate orotate.

It belongs to the purine/pyrimidine phosphoribosyltransferase family. PyrE subfamily. As to quaternary structure, homodimer. Mg(2+) serves as cofactor.

The catalysed reaction is orotidine 5'-phosphate + diphosphate = orotate + 5-phospho-alpha-D-ribose 1-diphosphate. It functions in the pathway pyrimidine metabolism; UMP biosynthesis via de novo pathway; UMP from orotate: step 1/2. Its function is as follows. Catalyzes the transfer of a ribosyl phosphate group from 5-phosphoribose 1-diphosphate to orotate, leading to the formation of orotidine monophosphate (OMP). This chain is Orotate phosphoribosyltransferase, found in Saccharophagus degradans (strain 2-40 / ATCC 43961 / DSM 17024).